The chain runs to 508 residues: Chromosomal replication initiator protein DnaA (508 aa).

Residues 1-90 (MSVELWQQCV…RRSSAPRAAP (90 aa)) form a domain I, interacts with DnaA modulators region. Positions 91 to 171 (NAPVSAAVAA…QVEGALKHTS (81 aa)) are domain II. The tract at residues 130 to 160 (EVEEPSSRDSFDSMSDSGSVPAASGRTEQRT) is disordered. A domain III, AAA+ region region spans residues 172 to 388 (YLNRTFTFET…GALKRVIAHS (217 aa)). 4 residues coordinate ATP: glycine 216, glycine 218, lysine 219, and threonine 220. The segment at 389 to 508 (HFMGRDITIE…YKNLLRTLTT (120 aa)) is domain IV, binds dsDNA.

This sequence belongs to the DnaA family. As to quaternary structure, oligomerizes as a right-handed, spiral filament on DNA at oriC.

The protein localises to the cytoplasm. Its function is as follows. Plays an essential role in the initiation and regulation of chromosomal replication. ATP-DnaA binds to the origin of replication (oriC) to initiate formation of the DNA replication initiation complex once per cell cycle. Binds the DnaA box (a 9 base pair repeat at the origin) and separates the double-stranded (ds)DNA. Forms a right-handed helical filament on oriC DNA; dsDNA binds to the exterior of the filament while single-stranded (ss)DNA is stabiized in the filament's interior. The ATP-DnaA-oriC complex binds and stabilizes one strand of the AT-rich DNA unwinding element (DUE), permitting loading of DNA polymerase. After initiation quickly degrades to an ADP-DnaA complex that is not apt for DNA replication. Binds acidic phospholipids. This is Chromosomal replication initiator protein DnaA from Pseudomonas entomophila (strain L48).